The sequence spans 185 residues: MINDIKKQSEQKMKKSMEALGHAFAKIRTGRANPAILESVMVSYYGTDTPLTQIANVVVEDARTLSVTPWEKNMVPQIEKAILKSDLGLNPSTAGTVIRVPMPALTEETRKELVKTARGEAENTRVAIRNLRRDANADIKTLLKDKEISEDEEKRGLDDIQKLTDKYIAEVDRVLAEKEKDLMAV.

It belongs to the RRF family.

It localises to the cytoplasm. Responsible for the release of ribosomes from messenger RNA at the termination of protein biosynthesis. May increase the efficiency of translation by recycling ribosomes from one round of translation to another. The sequence is that of Ribosome-recycling factor from Hahella chejuensis (strain KCTC 2396).